A 177-amino-acid chain; its full sequence is Interleukin-19 (177 aa).

Positions 1–24 are cleaved as a signal peptide; that stretch reads MKLQCVSLWLLGTILILCSVDNHG. Cystine bridges form between Cys-28-Cys-121, Cys-75-Cys-127, and Cys-76-Cys-129. N-linked (GlcNAc...) asparagine glycosylation occurs at Asn-56. N-linked (GlcNAc...) asparagine glycosylation is present at Asn-135.

This sequence belongs to the IL-10 family.

The protein resides in the secreted. Its function is as follows. Cytokine that functions as an anti-inflammatory and proangiogenic factor. Polarizes adaptive immunity to an anti-inflammatory phenotype through induction of T-helper 2 responses by both down-regulation of IFN-gamma and up-regulation of IL4 and IL13. Produced by osteocytes, stimulates granulopoiesis and neutrophil formation. Exerts its biological effect through a receptor complex consisting of a heterodimer of IL20RA and IL20RB. In turn, activates the Janus kinase (JAK) and signal transducer and activator of transcription (STAT) pathway, and importantly, STAT3. This is Interleukin-19 (IL19) from Homo sapiens (Human).